The primary structure comprises 277 residues: 3-methyl-2-oxobutanoate hydroxymethyltransferase (277 aa).

Residues aspartate 43 and aspartate 82 each coordinate Mg(2+). Residues 43-44 (DS), aspartate 82, and lysine 112 each bind 3-methyl-2-oxobutanoate. Glutamate 114 provides a ligand contact to Mg(2+). Glutamate 181 (proton acceptor) is an active-site residue.

It belongs to the PanB family. Homodecamer; pentamer of dimers. It depends on Mg(2+) as a cofactor.

The protein localises to the cytoplasm. The catalysed reaction is 3-methyl-2-oxobutanoate + (6R)-5,10-methylene-5,6,7,8-tetrahydrofolate + H2O = 2-dehydropantoate + (6S)-5,6,7,8-tetrahydrofolate. The protein operates within cofactor biosynthesis; (R)-pantothenate biosynthesis; (R)-pantoate from 3-methyl-2-oxobutanoate: step 1/2. Functionally, catalyzes the reversible reaction in which hydroxymethyl group from 5,10-methylenetetrahydrofolate is transferred onto alpha-ketoisovalerate to form ketopantoate. The polypeptide is 3-methyl-2-oxobutanoate hydroxymethyltransferase (Listeria monocytogenes serotype 4a (strain HCC23)).